The following is a 603-amino-acid chain: Penicillin-binding protein activator LpoA (603 aa).

Residues 1–26 (MAMNHHQRRSVPRLLTPIALSIVLSA) form the signal peptide. Cysteine 27 carries N-palmitoyl cysteine lipidation. Cysteine 27 is lipidated: S-diacylglycerol cysteine.

This sequence belongs to the LpoA family. As to quaternary structure, interacts with PBP1a.

The protein localises to the cell outer membrane. In terms of biological role, regulator of peptidoglycan synthesis that is essential for the function of penicillin-binding protein 1A (PBP1a). The sequence is that of Penicillin-binding protein activator LpoA from Vibrio cholerae serotype O1 (strain ATCC 39541 / Classical Ogawa 395 / O395).